A 500-amino-acid polypeptide reads, in one-letter code: Probable malate:quinone oxidoreductase (500 aa).

Belongs to the MQO family. FAD serves as cofactor.

The enzyme catalyses (S)-malate + a quinone = a quinol + oxaloacetate. It functions in the pathway carbohydrate metabolism; tricarboxylic acid cycle; oxaloacetate from (S)-malate (quinone route): step 1/1. The chain is Probable malate:quinone oxidoreductase from Gluconobacter oxydans (strain 621H) (Gluconobacter suboxydans).